The following is a 220-amino-acid chain: Fructose-6-phosphate aldolase 1 (220 aa).

The Schiff-base intermediate with substrate role is filled by K85.

Belongs to the transaldolase family. Type 3A subfamily. As to quaternary structure, homodecamer. Five subunits are arranged as a pentamer, and two ring-like pentamers pack like a donut to form the decamer.

It is found in the cytoplasm. The catalysed reaction is beta-D-fructose 6-phosphate = dihydroxyacetone + D-glyceraldehyde 3-phosphate. Its activity is regulated as follows. Inhibited by glycerol, inorganic phosphate and arabinose 5-phosphate. Catalyzes the reversible formation of fructose 6-phosphate from dihydroxyacetone (DHA) and D-glyceraldehyde 3-phosphate via an aldolization reaction. Can utilize several aldehydes as acceptor compounds in vitro, and hydroxyacetone (HA) or 1-hydroxy-butan-2-one as alternative donor substrate. Is also able to catalyze the direct stereoselective self-aldol addition of glycolaldehyde to furnish D-(-)-threose, and cross-aldol reactions of glycolaldehyde to other aldehyde acceptors. Is not able to cleave fructose, fructose 1-phosphate, glucose 6-phosphate, sedoheptulose 1,7-bisphosphate, xylulose 5-phosphate, ribulose 5-phosphate, and fructose 1,6-bisphosphate; cannot use dihydroxyacetone phosphate as donor compound nor D-glyceraldehyde as acceptor. Does not display transaldolase activity. This is Fructose-6-phosphate aldolase 1 (fsaA) from Escherichia coli (strain K12).